The following is a 680-amino-acid chain: ATPase family AAA domain-containing protein FIGL1 (680 aa).

Disordered stretches follow at residues 214–234, 250–275, and 288–352; these read YGNSIGKPDNQRKTSVNNQDR, FGTKRPHAETSSLANDGEVKEDGAPN, and VRQK…GGKT. A compositionally biased stretch (polar residues) spans 295–308; sequence TESPSSCLSPQSDK. Over residues 313 to 323 the composition is skewed to gly residues; that stretch reads RGYGSRSGGLR. The span at 336-346 shows a compositional bias: polar residues; it reads TNGNNVGNLTS. ATP-binding positions include alanine 406 and 446–451; that span reads GTGKTM.

This sequence belongs to the AAA ATPase family. Mg(2+) serves as cofactor.

It localises to the nucleus. It carries out the reaction ATP + H2O = ADP + phosphate + H(+). Its function is as follows. Involved in DNA double-strand break (DBS) repair via homologous recombination (HR). Limits class II meiotic crossover (CO) formation by regulating the invasion step of meiotic HR. May counteract DMC1 and RAD51-mediated inter-homolog strand invasion to limit CO formation. Functions independently of FANCM. The protein is ATPase family AAA domain-containing protein FIGL1 of Arabidopsis thaliana (Mouse-ear cress).